Here is a 63-residue protein sequence, read N- to C-terminus: Lantibiotic mutacin-1140 (63 aa).

Residues 1–41 (MSNTQLLEVLGTETFDVQEDLFAFDTTDTTIVASNDDPDTR) constitute a propeptide that is removed on maturation. Residues 44–48 (SWSLC) constitute a cross-link (lanthionine (Ser-Cys)). At Ser-46 the chain carries 2,3-didehydroalanine (Ser). The beta-methyllanthionine (Thr-Cys) cross-link spans 49–52 (TPGC). 2,3-didehydrobutyrine is present on Thr-55. A cross-link (lanthionine (Ser-Cys)) is located at residues 57–62 (SFNSYC). Residues 60–63 (SYCC) constitute a cross-link (S-(2-aminovinyl)-D-cysteine (Ser-Cys)).

It belongs to the type A lantibiotic family. Post-translationally, maturation of lantibiotics involves the enzymatic conversion of Thr, and Ser into dehydrated AA and the formation of thioether bonds with cysteine. The C-terminal lanthionine undergoes decarboxylation. This is followed by membrane translocation and cleavage of the modified precursor. In terms of processing, the structure of the 2,3-didehydrobutyrine is not discussed in PubMed:11082191.

In terms of biological role, lanthionine-containing peptide antibiotic (lantibiotic) active on Gram-positive bacteria. The bactericidal activity of lantibiotics is based on depolarization of energized bacterial cytoplasmic membranes, initiated by the formation of aqueous transmembrane pores. In Streptococcus mutans, this protein is Lantibiotic mutacin-1140 (lanA).